The sequence spans 224 residues: MTLKNKSIVVLLSGGLDSSTVTGIAKKSEAKIFGLSFDYGQRHKKELYSASIIAKHFNIEEFKIIKLDLSLWGGSSLTDTQKNIPLEGVQTNKIPNTYVPGRNTIFISVALSYAEAIDADFIGLGVNALDYSGYPDCRPDYIKKFQELADLANKRGRENNPIKLWTPLLDLNKEEIIKLAYSNHVPLEKTWSCYSGYSKPCGKCDSCRIRNDAYEKWLNNNNKK.

12-22 (LSGGLDSSTVT) lines the ATP pocket. 4 residues coordinate Zn(2+): Cys193, Cys201, Cys204, and Cys207.

Belongs to the QueC family. Requires Zn(2+) as cofactor.

It catalyses the reaction 7-carboxy-7-deazaguanine + NH4(+) + ATP = 7-cyano-7-deazaguanine + ADP + phosphate + H2O + H(+). It participates in purine metabolism; 7-cyano-7-deazaguanine biosynthesis. Functionally, catalyzes the ATP-dependent conversion of 7-carboxy-7-deazaguanine (CDG) to 7-cyano-7-deazaguanine (preQ(0)). The polypeptide is 7-cyano-7-deazaguanine synthase (Prochlorococcus marinus (strain MIT 9215)).